The following is a 171-amino-acid chain: Peptide deformylase (171 aa).

2 residues coordinate Fe cation: Cys-87 and His-129. Glu-130 is a catalytic residue. Residue His-133 coordinates Fe cation.

This sequence belongs to the polypeptide deformylase family. Fe(2+) is required as a cofactor.

The enzyme catalyses N-terminal N-formyl-L-methionyl-[peptide] + H2O = N-terminal L-methionyl-[peptide] + formate. Functionally, removes the formyl group from the N-terminal Met of newly synthesized proteins. Requires at least a dipeptide for an efficient rate of reaction. N-terminal L-methionine is a prerequisite for activity but the enzyme has broad specificity at other positions. The protein is Peptide deformylase of Pseudothermotoga lettingae (strain ATCC BAA-301 / DSM 14385 / NBRC 107922 / TMO) (Thermotoga lettingae).